The chain runs to 62 residues: Large ribosomal subunit protein bL28 (62 aa).

Residues 1 to 24 form a disordered region; the sequence is MGKQCFVTGRKASTGNNRSHALNS. The span at 11–24 shows a compositional bias: polar residues; that stretch reads KASTGNNRSHALNS.

Belongs to the bacterial ribosomal protein bL28 family.

The polypeptide is Large ribosomal subunit protein bL28 (Staphylococcus saprophyticus subsp. saprophyticus (strain ATCC 15305 / DSM 20229 / NCIMB 8711 / NCTC 7292 / S-41)).